An 89-amino-acid polypeptide reads, in one-letter code: Small ribosomal subunit protein uS15 (89 aa).

Belongs to the universal ribosomal protein uS15 family. In terms of assembly, part of the 30S ribosomal subunit. Forms a bridge to the 50S subunit in the 70S ribosome, contacting the 23S rRNA.

Its function is as follows. One of the primary rRNA binding proteins, it binds directly to 16S rRNA where it helps nucleate assembly of the platform of the 30S subunit by binding and bridging several RNA helices of the 16S rRNA. Functionally, forms an intersubunit bridge (bridge B4) with the 23S rRNA of the 50S subunit in the ribosome. The sequence is that of Small ribosomal subunit protein uS15 from Rhizobium meliloti (strain 1021) (Ensifer meliloti).